The chain runs to 124 residues: Large ribosomal subunit protein bL12 (124 aa).

This sequence belongs to the bacterial ribosomal protein bL12 family. As to quaternary structure, homodimer. Part of the ribosomal stalk of the 50S ribosomal subunit. Forms a multimeric L10(L12)X complex, where L10 forms an elongated spine to which 2 to 4 L12 dimers bind in a sequential fashion. Binds GTP-bound translation factors.

Forms part of the ribosomal stalk which helps the ribosome interact with GTP-bound translation factors. Is thus essential for accurate translation. The sequence is that of Large ribosomal subunit protein bL12 from Burkholderia thailandensis (strain ATCC 700388 / DSM 13276 / CCUG 48851 / CIP 106301 / E264).